A 367-amino-acid polypeptide reads, in one-letter code: MSDNSQKKVIVGMSGGVDSSVSAYLLKEQGYQVVGLFMKNWEEDDDTEYCSASADLADAQAVCDKLGIELHTINFAAEYWDNVFEHFLSEYKAGRTPNPDILCNKEIKFKAFLEYAAEDLGADYIATGHYVRRRDIDGKSQLLRGVDNNKDQSYFLYTLSHQQIAQSLFPVGEMEKPEVRKIAEKLDLATAKKKDSTGICFIGERKFTDFLSRYLPAKPGPIVTVDGETIGEHQGLMYHTLGQRKGLGIGGTKEGSEDPWYVVDKDVANNILIVAQGHEHPRLMSVGLIAQQLHWVAREPITEAFRCTVKTRYRQADIPCTVTPLDEDKIEVRFDYPVAAVTPGQSAVFYQDEVCLGGGIIETRIQE.

Residues 12–19 and methionine 38 contribute to the ATP site; that span reads GMSGGVDS. The segment at 98–100 is interaction with target base in tRNA; the sequence is NPD. Cysteine 103 (nucleophile) is an active-site residue. Cysteines 103 and 200 form a disulfide. Glycine 128 provides a ligand contact to ATP. The interval 150-152 is interaction with tRNA; it reads KDQ. The active-site Cysteine persulfide intermediate is cysteine 200. Residues 312–313 form an interaction with tRNA region; sequence RY.

The protein belongs to the MnmA/TRMU family. As to quaternary structure, interacts with TusE.

Its subcellular location is the cytoplasm. It carries out the reaction S-sulfanyl-L-cysteinyl-[protein] + uridine(34) in tRNA + AH2 + ATP = 2-thiouridine(34) in tRNA + L-cysteinyl-[protein] + A + AMP + diphosphate + H(+). Catalyzes the 2-thiolation of uridine at the wobble position (U34) of tRNA(Lys), tRNA(Glu) and tRNA(Gln), leading to the formation of s(2)U34, the first step of tRNA-mnm(5)s(2)U34 synthesis. Sulfur is provided by IscS, via a sulfur-relay system. Binds ATP and its substrate tRNAs. The sequence is that of tRNA-specific 2-thiouridylase MnmA from Proteus mirabilis (strain HI4320).